Consider the following 194-residue polypeptide: MIGYLKGNVIWKAENKVILETGGVGYRVLVPSTVRLKPVGEKLELFVYTYVREDSLDLYGFKTMEERELFETLLSVSGIGPRAAINILSSLSYKKFIEAILTEKVSILKQVSGIGPKTAKRLILELKGKLKDMSGDFEEPLPDNRNTELSDALASLGYSELEIEEALSNADIKNNGSLEENIKKALGYLGSKGS.

Residues 1 to 62 are domain I; the sequence is MIGYLKGNVI…EDSLDLYGFK (62 aa). Positions 63 to 136 are domain II; the sequence is TMEERELFET…KGKLKDMSGD (74 aa). The segment at 136–140 is flexible linker; the sequence is DFEEP. The tract at residues 141–194 is domain III; sequence LPDNRNTELSDALASLGYSELEIEEALSNADIKNNGSLEENIKKALGYLGSKGS.

This sequence belongs to the RuvA family. As to quaternary structure, homotetramer. Forms an RuvA(8)-RuvB(12)-Holliday junction (HJ) complex. HJ DNA is sandwiched between 2 RuvA tetramers; dsDNA enters through RuvA and exits via RuvB. An RuvB hexamer assembles on each DNA strand where it exits the tetramer. Each RuvB hexamer is contacted by two RuvA subunits (via domain III) on 2 adjacent RuvB subunits; this complex drives branch migration. In the full resolvosome a probable DNA-RuvA(4)-RuvB(12)-RuvC(2) complex forms which resolves the HJ.

The protein localises to the cytoplasm. Its function is as follows. The RuvA-RuvB-RuvC complex processes Holliday junction (HJ) DNA during genetic recombination and DNA repair, while the RuvA-RuvB complex plays an important role in the rescue of blocked DNA replication forks via replication fork reversal (RFR). RuvA specifically binds to HJ cruciform DNA, conferring on it an open structure. The RuvB hexamer acts as an ATP-dependent pump, pulling dsDNA into and through the RuvAB complex. HJ branch migration allows RuvC to scan DNA until it finds its consensus sequence, where it cleaves and resolves the cruciform DNA. This is Holliday junction branch migration complex subunit RuvA from Halothermothrix orenii (strain H 168 / OCM 544 / DSM 9562).